The primary structure comprises 69 residues: Protein transport protein Sec61 subunit gamma-1 (69 aa).

M1 carries the post-translational modification N-acetylmethionine. Residues 1-32 (MDAIDSVVDPLRDFAKDSIRLVKRCHKPDRKE) lie on the Cytoplasmic side of the membrane. Residues 33–61 (FTKVAVRTAIGFVVMGFVGFFVKLIFIPI) traverse the membrane as a helical segment. Topologically, residues 62–69 (NNIIVGAT) are extracellular.

Belongs to the SecE/SEC61-gamma family. Heterotrimeric complex composed of SEC61-alpha, SEC61-beta and SEC61-gamma.

The protein localises to the endoplasmic reticulum membrane. In terms of biological role, necessary for protein translocation in the endoplasmic reticulum. This chain is Protein transport protein Sec61 subunit gamma-1 (SEC61G1), found in Arabidopsis thaliana (Mouse-ear cress).